Here is a 147-residue protein sequence, read N- to C-terminus: Small ribosomal subunit protein uS12 (147 aa).

This sequence belongs to the universal ribosomal protein uS12 family. In terms of assembly, part of the 30S ribosomal subunit.

Functionally, with S4 and S5 plays an important role in translational accuracy. Located at the interface of the 30S and 50S subunits. This is Small ribosomal subunit protein uS12 from Saccharolobus solfataricus (strain ATCC 35092 / DSM 1617 / JCM 11322 / P2) (Sulfolobus solfataricus).